Reading from the N-terminus, the 404-residue chain is Cysteine desulfurase IscS (404 aa).

Pyridoxal 5'-phosphate is bound by residues 75–76 (AT), Asn155, Gln183, and 203–205 (TSH). Position 206 is an N6-(pyridoxal phosphate)lysine (Lys206). Thr243 lines the pyridoxal 5'-phosphate pocket. Catalysis depends on Cys328, which acts as the Cysteine persulfide intermediate. Cys328 lines the [2Fe-2S] cluster pocket.

It belongs to the class-V pyridoxal-phosphate-dependent aminotransferase family. NifS/IscS subfamily. Homodimer. Forms a heterotetramer with IscU, interacts with other sulfur acceptors. Pyridoxal 5'-phosphate serves as cofactor.

It is found in the cytoplasm. It carries out the reaction (sulfur carrier)-H + L-cysteine = (sulfur carrier)-SH + L-alanine. The protein operates within cofactor biosynthesis; iron-sulfur cluster biosynthesis. Its function is as follows. Master enzyme that delivers sulfur to a number of partners involved in Fe-S cluster assembly, tRNA modification or cofactor biosynthesis. Catalyzes the removal of elemental sulfur atoms from cysteine to produce alanine. Functions as a sulfur delivery protein for Fe-S cluster synthesis onto IscU, an Fe-S scaffold assembly protein, as well as other S acceptor proteins. The chain is Cysteine desulfurase IscS from Photobacterium profundum (strain SS9).